The chain runs to 452 residues: MVSAPGDHAGVSREGLRILPVTGLPEFRPGDDVAERIAAAAPWLADGDILVVTSKIIAKAEGRVVPAPVDPEERDAVRRALVEQEAVRVLARKGRTLITENKLGIVQAASGVDGSNVEKDELVLLPADPDASAAALRAGLAERLGVRVAVVVTDTMGRAWRNGQTDAAIGAAGLRVLHDYAGAVDGQGNELHVTQVAVADELAAAADLVKGKLRGVPVAVVRGLPTQEDGSTAADLVRAGEEDLFWLGTAEAVERGRREAVLLRRSVRTFADTPVEPDTIRAAVSVALTAPAPHHTRPVRFVWVRDAQRRQRLLAAMADKWRADLRADGLDPERIERRVGRGRILFDAPEVLIPCCVPDGAHSYPDERRQAAETTMFTVAVGAAVQGLLVALATEGVGSCWIGSTIFAPEVTRAELDLPADWNPLGAIAVGYPTEELAPRPPRDPGDGLVER.

The interval 1-248 (MVSAPGDHAG…AGEEDLFWLG (248 aa)) is coenzyme F420:L-glutamate ligase. GTP is bound by residues 24–27 (LPEF), serine 54, and lysine 59. Aspartate 113 lines the a divalent metal cation pocket. Asparagine 116 contributes to the GTP binding site. 2 residues coordinate a divalent metal cation: aspartate 154 and threonine 155. Residues 249–452 (TAEAVERGRR…RDPGDGLVER (204 aa)) are dehydro-coenzyme F420-0 reductase. Residues 264-268 (RRSVR) and alanine 292 contribute to the FMN site. Aspartate 324 is a coenzyme F420-(gamma-Glu)n binding site. Residues glycine 403 and arginine 440 each contribute to the FMN site.

In the N-terminal section; belongs to the CofE family. Mg(2+) serves as cofactor. The cofactor is Mn(2+). Requires K(+) as cofactor.

The catalysed reaction is oxidized coenzyme F420-0 + GTP + L-glutamate = oxidized coenzyme F420-1 + GDP + phosphate + H(+). The enzyme catalyses oxidized coenzyme F420-0 + FMN + H(+) = dehydro coenzyme F420-0 + FMNH2. It catalyses the reaction oxidized coenzyme F420-1 + GTP + L-glutamate = oxidized coenzyme F420-2 + GDP + phosphate + H(+). Its pathway is cofactor biosynthesis; coenzyme F420 biosynthesis. Functionally, bifunctional enzyme that catalyzes the GTP-dependent successive addition of two or more gamma-linked L-glutamates to the L-lactyl phosphodiester of 7,8-didemethyl-8-hydroxy-5-deazariboflavin (F420-0) to form polyglutamated F420 derivatives, and the FMNH2-dependent reduction of dehydro-F420-0 to form F420-0. The sequence is that of Bifunctional F420 biosynthesis protein FbiB from Nocardia farcinica (strain IFM 10152).